The primary structure comprises 357 residues: Peptide chain release factor 1 (357 aa).

Gln-234 carries the N5-methylglutamine modification. Residues 284–307 (KKQEQRSNDRKQQVGSGDRSERIR) show a composition bias toward basic and acidic residues. Positions 284–313 (KKQEQRSNDRKQQVGSGDRSERIRTYNFPQ) are disordered.

This sequence belongs to the prokaryotic/mitochondrial release factor family. In terms of processing, methylated by PrmC. Methylation increases the termination efficiency of RF1.

The protein resides in the cytoplasm. In terms of biological role, peptide chain release factor 1 directs the termination of translation in response to the peptide chain termination codons UAG and UAA. This is Peptide chain release factor 1 from Borrelia turicatae (strain 91E135).